A 225-amino-acid polypeptide reads, in one-letter code: Peptidyl-prolyl cis-trans isomerase D (225 aa).

A signal peptide spans 1 to 22 (MKLQFFSFITLFACLFTTAIFA). The PPIase cyclophilin-type domain maps to 37–195 (YFDINHGDKQ…KEVIIVESGE (159 aa)). Residue asparagine 139 is glycosylated (N-linked (GlcNAc...) asparagine). The Prevents secretion from ER motif lies at 222-225 (HDEL).

Belongs to the cyclophilin-type PPIase family. PPIase B subfamily.

The protein localises to the endoplasmic reticulum lumen. The enzyme catalyses [protein]-peptidylproline (omega=180) = [protein]-peptidylproline (omega=0). In terms of biological role, PPIases accelerate the folding of proteins. It catalyzes the cis-trans isomerization of proline imidic peptide bonds in oligopeptides. This Saccharomyces cerevisiae (strain ATCC 204508 / S288c) (Baker's yeast) protein is Peptidyl-prolyl cis-trans isomerase D.